The chain runs to 245 residues: Dehydrogenase/reductase SDR family member 6 (245 aa).

Residues 16–18 (QGI), Asp-37, and Asp-58 each bind NAD(+). Arg-144 is a binding site for substrate. The active-site Proton acceptor is the Tyr-147. NAD(+) contacts are provided by residues Lys-151 and 180–184 (VDTPS). 2 residues coordinate substrate: Arg-188 and Arg-205.

The protein belongs to the short-chain dehydrogenases/reductases (SDR) family. Homotetramer. In terms of tissue distribution, detected in liver (at protein level).

Its subcellular location is the cytoplasm. It catalyses the reaction cis-4-hydroxy-L-proline + NAD(+) = 4-oxo-L-proline + NADH + H(+). The catalysed reaction is (R)-3-hydroxybutanoate + NAD(+) = acetoacetate + NADH + H(+). It participates in amino-acid metabolism. Its pathway is siderophore biosynthesis. In terms of biological role, NAD(H)-dependent dehydrogenase/reductase with a preference for cyclic substrates. Catalyzes stereoselective conversion of 4-oxo-L-proline to cis-4-hydroxy-L-proline, likely a detoxification mechanism for ketoprolines. Mediates the formation of 2,5-dihydroxybenzoate (2,5-DHBA), a siderophore that chelates free cytoplasmic iron and associates with LCN2, thereby regulating iron transport and homeostasis while protecting cells against free radical-induced oxidative stress. The iron-siderophore complex is imported into mitochondria, providing an iron source for mitochondrial metabolic processes in particular heme synthesis. May act as a 3-hydroxybutyrate dehydrogenase. The chain is Dehydrogenase/reductase SDR family member 6 from Homo sapiens (Human).